Here is a 161-residue protein sequence, read N- to C-terminus: Transcriptional repressor NrdR (161 aa).

Polar residues predominate over residues 1–11 (MRCPSCNSLDT). The disordered stretch occupies residues 1–20 (MRCPSCNSLDTQVKDSRPTE). A zinc finger lies at 3–34 (CPSCNSLDTQVKDSRPTEDSSVIRRRRVCVTC). The ATP-cone domain occupies 49–139 (LTVIKRNGRR…VYRNFREAKD (91 aa)).

Belongs to the NrdR family. It depends on Zn(2+) as a cofactor.

Functionally, negatively regulates transcription of bacterial ribonucleotide reductase nrd genes and operons by binding to NrdR-boxes. This chain is Transcriptional repressor NrdR, found in Bradyrhizobium sp. (strain ORS 278).